The chain runs to 276 residues: NH(3)-dependent NAD(+) synthetase (276 aa).

43 to 50 contributes to the ATP binding site; the sequence is GISGGVDS. A Mg(2+)-binding site is contributed by D49. R146 serves as a coordination point for deamido-NAD(+). Residue T166 participates in ATP binding. Mg(2+) is bound at residue E171. Deamido-NAD(+) is bound by residues K179 and D186. Positions 195 and 217 each coordinate ATP. 266–267 contributes to the deamido-NAD(+) binding site; that stretch reads HK.

The protein belongs to the NAD synthetase family. As to quaternary structure, homodimer.

It carries out the reaction deamido-NAD(+) + NH4(+) + ATP = AMP + diphosphate + NAD(+) + H(+). The protein operates within cofactor biosynthesis; NAD(+) biosynthesis; NAD(+) from deamido-NAD(+) (ammonia route): step 1/1. Its function is as follows. Catalyzes the ATP-dependent amidation of deamido-NAD to form NAD. Uses ammonia as a nitrogen source. In Shewanella putrefaciens (strain CN-32 / ATCC BAA-453), this protein is NH(3)-dependent NAD(+) synthetase.